Consider the following 771-residue polypeptide: Probable exo-1,4-beta-xylosidase bxlB (771 aa).

The N-terminal stretch at 1–25 (MAHITSWHYGNAIALLVSLAPGALS) is a signal peptide. N-linked (GlcNAc...) asparagine glycosylation occurs at Asn67. Asp293 is an active-site residue. Asn305, Asn345, Asn423, and Asn464 each carry an N-linked (GlcNAc...) asparagine glycan.

This sequence belongs to the glycosyl hydrolase 3 family.

The protein localises to the secreted. It carries out the reaction Hydrolysis of (1-&gt;4)-beta-D-xylans, to remove successive D-xylose residues from the non-reducing termini.. Its pathway is glycan degradation; xylan degradation. Xylan 1,4-beta-xylosidase involved in the hydrolysis of xylan, a major structural heterogeneous polysaccharide found in plant biomass representing the second most abundant polysaccharide in the biosphere, after cellulose. This is Probable exo-1,4-beta-xylosidase bxlB (bxlB) from Aspergillus fumigatus (strain CBS 144.89 / FGSC A1163 / CEA10) (Neosartorya fumigata).